Here is an 83-residue protein sequence, read N- to C-terminus: Scyreptin (83 aa).

In terms of biological role, cationic antimicrobial peptide that exhibits a potent and broad-spectrum antimicrobial activity against both bacteria and fungi, as well as against the multidrug-resistant bacteria P.aeruginosa. Exhibits rapid bactericidal kinetic. Acts by destroying the integrity of bacterial membranes, leading to bacterial death. Also exhibits potent anti-biofilm activity against P.aeruginosa. Shows high thermal stability and ion tolerance, as it maintains antibacterial activity even when heated to 100 degrees Celsius for 30 minutes and in presence of high levels of NaCl, CaCl(2) and MgCl(2). Does not show cytotoxicity and hemolytic activity. In a mouse model of burn infection, exhibits a remarkably reduction in the bacterial load caused by multidrug-resistant P.aeruginosa at the site of infection, and promotes wound healing. The sequence is that of Scyreptin from Scylla paramamosain (Mud crab).